The following is a 741-amino-acid chain: MAPSFDTLSEQDLHEEEEEEIDVSDLKAQYEVKLEEGLDTFVVIDGLPVVPEESRQKLVKFLMRKLNTVGHTSEDAVFMPVNDKNMSEGYAFVEYETPEQAVAAVKQLHGTPLDKKHTLLVNKLMDIERYGREGRIDEEYKPPTIEPFKEKEHLRSWLSDPNARDQFALYRGDKVGVFWNNKNNPPENVVDRAHWTQLFVQWSPKGTFLASVHPQGVQLWGGPAFSKQKQFPHPFVQLIEFSPGESYLTTWSARPIQVEEGQPILSYEEDGKNIIVWDIETGKPLRSFVSHDLSAPGGESDAQPKKKVQWPAFKWSADEKYVARMLQGQSISIYELPRMNLLGKTSVKVDGVMDFEWSPATVNREGVKQYEQLLCFWTPEIGSNPARVAMMSVPSKEIVRTRNLFNVSDVKLHWQSQGSFVCVKVDRHSKSKKSMATNLEIFRVREKGVPVEVVDSLKDTVINFAWEPNGSRFVLITNGETVAGAAVAPKTAVSFFAREKKGGAAGNFKLVRTIEKKNSNAIYWSPKGRFVVVATVHSQTSFDMDFWDMDFEGEKPEAEKDLTANVQLMKTLEHYGVTDIDWDPTGRYVVSSASAWTHSLENGWNMHTFSGNTLSENPTEKFKQFLWRPRPPTFLSKEEQKQVRKNLREYSKEFDEEDRYAVDIANTAVVEKRKRVLSEWIAWIRREKELLSEDKDAYGLPEDVDDPKKAKDAPAVTSEQGEAVVEEIVEEIVEESEEVIG.

A compositionally biased stretch (polar residues) spans 1–10 (MAPSFDTLSE). Residues 1 to 22 (MAPSFDTLSEQDLHEEEEEEID) form a disordered region. Residues 13–22 (LHEEEEEEID) show a composition bias toward acidic residues. The RRM domain occupies 40-126 (TFVVIDGLPV…HTLLVNKLMD (87 aa)). WD repeat units lie at residues 193–230 (AHWT…KQKQ), 232–289 (PHPF…RSFV), 303–344 (QPKK…LLGK), 514–557 (IEKK…EKPE), and 572–610 (LEHY…HTFS). The interval 695 to 722 (KDAYGLPEDVDDPKKAKDAPAVTSEQGE) is disordered.

It belongs to the eIF-3 subunit B family. As to quaternary structure, component of the eukaryotic translation initiation factor 3 (eIF-3) complex.

Its subcellular location is the cytoplasm. Functionally, RNA-binding component of the eukaryotic translation initiation factor 3 (eIF-3) complex, which is involved in protein synthesis of a specialized repertoire of mRNAs and, together with other initiation factors, stimulates binding of mRNA and methionyl-tRNAi to the 40S ribosome. The eIF-3 complex specifically targets and initiates translation of a subset of mRNAs involved in cell proliferation. The chain is Eukaryotic translation initiation factor 3 subunit B (prt1) from Aspergillus clavatus (strain ATCC 1007 / CBS 513.65 / DSM 816 / NCTC 3887 / NRRL 1 / QM 1276 / 107).